A 129-amino-acid chain; its full sequence is Snaclec rhodocetin subunit beta (129 aa).

The 123-residue stretch at 3 to 125 (RCPTTWSASK…EEKNAFLCKF (123 aa)) folds into the C-type lectin domain. Cystine bridges form between Cys-4–Cys-15, Cys-32–Cys-123, and Cys-98–Cys-115.

In terms of assembly, heterotetramer of subunit alpha, beta, gamma and delta; only the gamma and the delta subunits are disulfide-linked. Alpha-beta heterodimer and gamma-delta heterodimer associate orthogonally, giving a cruciform conformation. This heterotetramer may covalently dimerizes thanks to the gamma subunit. Expressed by the venom gland.

Its subcellular location is the secreted. In terms of biological role, potent inhibitor of collagen-induced platelet aggregation. It acts by binding to the integrin alpha2A domain and blocks collagen binding to integrin alpha-2/beta-1 (ITGA2/ITGB1). The gamma/delta subunits mainly contribute to this activity. The protein is Snaclec rhodocetin subunit beta of Calloselasma rhodostoma (Malayan pit viper).